The primary structure comprises 163 residues: Phosphopantetheine adenylyltransferase (163 aa).

Thr-11 contributes to the substrate binding site. Residues 11 to 12 and His-19 contribute to the ATP site; that span reads TF. Substrate contacts are provided by Lys-43, Leu-75, and Arg-89. ATP contacts are provided by residues 90-92, Glu-100, and 125-131; these read GLR and YSFISST.

Belongs to the bacterial CoaD family. As to quaternary structure, homohexamer. Mg(2+) serves as cofactor.

It is found in the cytoplasm. It catalyses the reaction (R)-4'-phosphopantetheine + ATP + H(+) = 3'-dephospho-CoA + diphosphate. It participates in cofactor biosynthesis; coenzyme A biosynthesis; CoA from (R)-pantothenate: step 4/5. Functionally, reversibly transfers an adenylyl group from ATP to 4'-phosphopantetheine, yielding dephospho-CoA (dPCoA) and pyrophosphate. The chain is Phosphopantetheine adenylyltransferase from Acinetobacter baylyi (strain ATCC 33305 / BD413 / ADP1).